The primary structure comprises 579 residues: Adipocyte plasma membrane-associated protein Hemomucin (579 aa).

Residues 1 to 6 (MGLLYA) lie on the Cytoplasmic side of the membrane. Residues 7-29 (LRVRIMNFMIFFLLIILMPGLPP) form a helical membrane-spanning segment. At 30 to 579 (RTTFPFKDYI…INKQGVNVEL (550 aa)) the chain is on the extracellular side. N-linked (GlcNAc...) asparagine glycans are attached at residues Asn-213 and Asn-217. Residues 427–579 (GLEASIGVPP…INKQGVNVEL (153 aa)) are disordered. A compositionally biased stretch (low complexity) spans 435-529 (PPSKATPKPK…PKPTTTTTPT (95 aa)).

It belongs to the strictosidine synthase family. As to quaternary structure, interacts with sturkopf. In terms of processing, O-glycosylated. Glycosylated in the ovary of 4 day old females. Post-translationally, phosphorylated. As to expression, detected in ovaries (at protein level). In larvae, detected in the fat body, salivary glands, imaginal disks and gut (at protein level). In adults, expressed in the cardia, and in regions of the ventriculus including the area posterior to the cardia. In females also expressed in follicle cells.

The protein localises to the cell membrane. Its function is as follows. Transmembrane mucin that may be involved in cellular adhesion and the innate immune response. Membrane-tethered mucins are involved in many cell surface functions and form a physical barrier around cells to regulate cell-cell and/or cell-substrate interactions, and protect against pathogens or harmful extracellular conditions. This mucin likely acts in hemocyte adhesion as it is released from hemocytes during coagulation and is also able to bind lipophorin particles which form part of the hemocyte coagulogen. Able to induce expression of the antibacterial proteins in the presence of GalNAc-specific lectins and so probably also functions in the innate immune response. The chain is Adipocyte plasma membrane-associated protein Hemomucin from Drosophila melanogaster (Fruit fly).